A 439-amino-acid polypeptide reads, in one-letter code: Xylose isomerase (439 aa).

Catalysis depends on residues H103 and D106. The Mg(2+) site is built by E234, E270, H273, D298, D309, D311, and D341.

Belongs to the xylose isomerase family. Homotetramer. Mg(2+) serves as cofactor.

The protein localises to the cytoplasm. It catalyses the reaction alpha-D-xylose = alpha-D-xylulofuranose. The protein is Xylose isomerase of Bacteroides fragilis (strain ATCC 25285 / DSM 2151 / CCUG 4856 / JCM 11019 / LMG 10263 / NCTC 9343 / Onslow / VPI 2553 / EN-2).